A 988-amino-acid polypeptide reads, in one-letter code: Kinesin-like protein CIN8 (988 aa).

A Kinesin motor domain is found at Asn-33 to Ile-470. Gly-125–Thr-132 contributes to the ATP binding site. The segment at Phe-206–Ser-301 is disordered. A compositionally biased stretch (low complexity) spans Ser-208 to Arg-237. Positions His-248–Ser-280 are enriched in polar residues. Residues Asn-281 to Ser-301 are compositionally biased toward low complexity. 2 coiled-coil regions span residues Glu-514 to Gln-619 and Lys-707 to Phe-769. Residues Ala-965–Asp-974 are compositionally biased toward basic and acidic residues. The interval Ala-965–Asp-988 is disordered.

This sequence belongs to the TRAFAC class myosin-kinesin ATPase superfamily. Kinesin family. BimC subfamily.

The protein localises to the cytoplasm. It localises to the cytoskeleton. Its subcellular location is the spindle. In terms of biological role, elongates the mitotic spindle by interacting with spindle microtubules to generate an outward force pushing spindle poles apart. Following spindle assembly, CIN8 and KIP1 apparently act to oppose a force, possibly generated by KAR3, that draws separated poles back together. The polypeptide is Kinesin-like protein CIN8 (CIN8) (Candida glabrata (strain ATCC 2001 / BCRC 20586 / JCM 3761 / NBRC 0622 / NRRL Y-65 / CBS 138) (Yeast)).